The sequence spans 201 residues: Glycerol-3-phosphate acyltransferase (201 aa).

Helical transmembrane passes span 4 to 24, 84 to 104, 116 to 136, and 157 to 177; these read IASLVLAYLLGSVPFAVLVSL, EIAMVGLAVFIGHLWPVFLAF, VLLAVNPWLALIAAAVWLAVA, and AWFIEPGVYAGLTIVIALLLV.

This sequence belongs to the PlsY family. As to quaternary structure, probably interacts with PlsX.

The protein localises to the cell inner membrane. It catalyses the reaction an acyl phosphate + sn-glycerol 3-phosphate = a 1-acyl-sn-glycero-3-phosphate + phosphate. It participates in lipid metabolism; phospholipid metabolism. In terms of biological role, catalyzes the transfer of an acyl group from acyl-phosphate (acyl-PO(4)) to glycerol-3-phosphate (G3P) to form lysophosphatidic acid (LPA). This enzyme utilizes acyl-phosphate as fatty acyl donor, but not acyl-CoA or acyl-ACP. The polypeptide is Glycerol-3-phosphate acyltransferase (Laribacter hongkongensis (strain HLHK9)).